Consider the following 319-residue polypeptide: 4-hydroxy-3-methylbut-2-enyl diphosphate reductase (319 aa).

Residue Cys17 participates in [4Fe-4S] cluster binding. (2E)-4-hydroxy-3-methylbut-2-enyl diphosphate-binding residues include His46 and His79. Residues His46 and His79 each coordinate dimethylallyl diphosphate. The isopentenyl diphosphate site is built by His46 and His79. A [4Fe-4S] cluster-binding site is contributed by Cys101. His129 is a (2E)-4-hydroxy-3-methylbut-2-enyl diphosphate binding site. His129 serves as a coordination point for dimethylallyl diphosphate. Isopentenyl diphosphate is bound at residue His129. The active-site Proton donor is Glu131. Residue Thr170 participates in (2E)-4-hydroxy-3-methylbut-2-enyl diphosphate binding. Position 200 (Cys200) interacts with [4Fe-4S] cluster. Residues Ser228, Ser229, Asn230, and Ser273 each coordinate (2E)-4-hydroxy-3-methylbut-2-enyl diphosphate. Dimethylallyl diphosphate contacts are provided by Ser228, Ser229, Asn230, and Ser273. Residues Ser228, Ser229, Asn230, and Ser273 each contribute to the isopentenyl diphosphate site.

Belongs to the IspH family. [4Fe-4S] cluster serves as cofactor.

It catalyses the reaction isopentenyl diphosphate + 2 oxidized [2Fe-2S]-[ferredoxin] + H2O = (2E)-4-hydroxy-3-methylbut-2-enyl diphosphate + 2 reduced [2Fe-2S]-[ferredoxin] + 2 H(+). It carries out the reaction dimethylallyl diphosphate + 2 oxidized [2Fe-2S]-[ferredoxin] + H2O = (2E)-4-hydroxy-3-methylbut-2-enyl diphosphate + 2 reduced [2Fe-2S]-[ferredoxin] + 2 H(+). The protein operates within isoprenoid biosynthesis; dimethylallyl diphosphate biosynthesis; dimethylallyl diphosphate from (2E)-4-hydroxy-3-methylbutenyl diphosphate: step 1/1. It participates in isoprenoid biosynthesis; isopentenyl diphosphate biosynthesis via DXP pathway; isopentenyl diphosphate from 1-deoxy-D-xylulose 5-phosphate: step 6/6. Functionally, catalyzes the conversion of 1-hydroxy-2-methyl-2-(E)-butenyl 4-diphosphate (HMBPP) into a mixture of isopentenyl diphosphate (IPP) and dimethylallyl diphosphate (DMAPP). Acts in the terminal step of the DOXP/MEP pathway for isoprenoid precursor biosynthesis. This is 4-hydroxy-3-methylbut-2-enyl diphosphate reductase from Cereibacter sphaeroides (strain ATCC 17023 / DSM 158 / JCM 6121 / CCUG 31486 / LMG 2827 / NBRC 12203 / NCIMB 8253 / ATH 2.4.1.) (Rhodobacter sphaeroides).